The primary structure comprises 409 residues: SPI-1 type 3 secretion system translocon protein SctB (409 aa).

The helical transmembrane segment at 119–140 threads the bilayer; the sequence is ISGMSSSAVALLAAANTLMLTL.

It belongs to the SctB/SipC family. In terms of assembly, the core secretion machinery of the T3SS is composed of approximately 20 different proteins, including cytoplasmic components, a base, an export apparatus and a needle. This subunit is involved in the formation of a pore, called the translocon, in host membrane.

The protein localises to the secreted. It is found in the host membrane. In terms of biological role, component of the type III secretion system 1 (SPI-1 T3SS), also called injectisome, which is used to inject bacterial effector proteins into eukaryotic host cells. SipB/SctE1 and SipC/SctB1 are inserted into the host membrane where they form a pore and allow the translocation of effector proteins into the cytosol of target cells. This is SPI-1 type 3 secretion system translocon protein SctB from Salmonella typhimurium (strain 14028s / SGSC 2262).